Here is a 419-residue protein sequence, read N- to C-terminus: UDP-N-acetylglucosamine 1-carboxyvinyltransferase 2 (419 aa).

Position 22-23 (22-23 (KN)) interacts with phosphoenolpyruvate. Residue R92 participates in UDP-N-acetyl-alpha-D-glucosamine binding. Catalysis depends on C116, which acts as the Proton donor. The residue at position 116 (C116) is a 2-(S-cysteinyl)pyruvic acid O-phosphothioketal. UDP-N-acetyl-alpha-D-glucosamine contacts are provided by residues 121-125 (RPIDL), D306, and I328.

This sequence belongs to the EPSP synthase family. MurA subfamily.

The protein resides in the cytoplasm. It catalyses the reaction phosphoenolpyruvate + UDP-N-acetyl-alpha-D-glucosamine = UDP-N-acetyl-3-O-(1-carboxyvinyl)-alpha-D-glucosamine + phosphate. It functions in the pathway cell wall biogenesis; peptidoglycan biosynthesis. Functionally, cell wall formation. Adds enolpyruvyl to UDP-N-acetylglucosamine. The polypeptide is UDP-N-acetylglucosamine 1-carboxyvinyltransferase 2 (Streptococcus pyogenes serotype M1).